Here is a 443-residue protein sequence, read N- to C-terminus: Adenylate cyclase (443 aa).

6 helical membrane passes run 47–69, 74–93, 98–120, 124–143, 148–167, and 180–202; these read VLTI…QLAT, WYIA…VPLL, GLVA…GWDV, AGAQ…LVGI, LAVG…EFLV, and SVSF…WFAL. The Cytoplasmic segment spans residues 203 to 443; the sequence is RDTARAEAVM…RGAEPRTAGV (241 aa). The Guanylate cyclase domain occupies 251 to 378; it reads SVLFADIVGF…DAVNVASRME (128 aa). Mg(2+) contacts are provided by D256 and D300.

This sequence belongs to the adenylyl cyclase class-4/guanylyl cyclase family. Homodimer. Can also exist as monomer. It depends on Mg(2+) as a cofactor. Mn(2+) serves as cofactor.

The protein resides in the cell membrane. The catalysed reaction is ATP = 3',5'-cyclic AMP + diphosphate. This is Adenylate cyclase (cya) from Mycobacterium bovis (strain ATCC BAA-935 / AF2122/97).